The primary structure comprises 226 residues: MKQLEEFEKKLGYSFEDKKLLKEALTHKSYKSPVNNERLEFLGDAVLDLVVGEYLFKKFPKANEGELSKLRASLVNEEGFAKLAQKLDIGKYIFISQAEENNQGRTKPSLLSNAFEAVMGAIYLEKGLEKVRELSLKLLEEAYPKIDLDSLFKDFKTALQEFTQAHYGITPTYKLLGSSGPDHKKEFEVAVLLHEETISTAKGRSKKAAQQEAAKEALKILKARNE.

Residues 4-127 (LEEFEKKLGY…VMGAIYLEKG (124 aa)) form the RNase III domain. E40 contacts Mg(2+). D44 is a catalytic residue. The Mg(2+) site is built by N113 and E116. The active site involves E116. The 70-residue stretch at 154–223 (DFKTALQEFT…AKEALKILKA (70 aa)) folds into the DRBM domain.

It belongs to the ribonuclease III family. As to quaternary structure, homodimer. It depends on Mg(2+) as a cofactor.

The protein resides in the cytoplasm. The catalysed reaction is Endonucleolytic cleavage to 5'-phosphomonoester.. In terms of biological role, digests double-stranded RNA. Involved in the processing of primary rRNA transcript to yield the immediate precursors to the large and small rRNAs (23S and 16S). Processes some mRNAs, and tRNAs when they are encoded in the rRNA operon. Processes pre-crRNA and tracrRNA of type II CRISPR loci if present in the organism. In Nitratiruptor sp. (strain SB155-2), this protein is Ribonuclease 3.